A 469-amino-acid polypeptide reads, in one-letter code: Glutamate--tRNA ligase (469 aa).

Positions Pro12–Asn22 match the 'HIGH' region motif. The 'KMSKS' region motif lies at Lys244–Arg248. Residue Lys247 participates in ATP binding.

Belongs to the class-I aminoacyl-tRNA synthetase family. Glutamate--tRNA ligase type 1 subfamily. In terms of assembly, monomer.

The protein localises to the cytoplasm. The catalysed reaction is tRNA(Glu) + L-glutamate + ATP = L-glutamyl-tRNA(Glu) + AMP + diphosphate. In terms of biological role, catalyzes the attachment of glutamate to tRNA(Glu) in a two-step reaction: glutamate is first activated by ATP to form Glu-AMP and then transferred to the acceptor end of tRNA(Glu). This chain is Glutamate--tRNA ligase, found in Acidovorax sp. (strain JS42).